The sequence spans 94 residues: Selenoprotein K (94 aa).

Residues 20-42 (LSLITDFFWGIAEFVVLFFKTLL) form a helical membrane-spanning segment. A disordered region spans residues 47–94 (KKGRGYRNSSDSRYDDGRGPPGNPPRRMGRISHLHGPSPPPMAGGUGR). Residue selenocysteine 92 is a non-standard amino acid, selenocysteine.

It belongs to the selenoprotein K family. In terms of assembly, interacts with DERL1, DERL2, DERL3 and SELENOS. The SELENOK-SELENOS complex interacts with VCP. Interacts with ZDHHC6. Post-translationally, cleaved by CAPN2/m-calpain in resting macrophages but not in activated macrophages. Macrophage activation up-regulates expression of the calpain inhibitor CAST/calpastatin, resulting in inhibition of CAPN2 activity. Truncated SELENOK proteins produced by failed UGA/Sec decoding are ubiquitinated by the CRL2(KLHDC2) complex, which recognizes the diglycine (Gly-Gly) at the C-terminus of truncated SELENOK proteins.

It is found in the endoplasmic reticulum membrane. It localises to the cell membrane. Required for Ca(2+) flux in immune cells and plays a role in T-cell proliferation and in T-cell and neutrophil migration. Involved in endoplasmic reticulum-associated degradation (ERAD) of soluble glycosylated proteins. Required for palmitoylation and cell surface expression of CD36 and involved in macrophage uptake of low-density lipoprotein and in foam cell formation. Together with ZDHHC6, required for palmitoylation of ITPR1 in immune cells, leading to regulate ITPR1 stability and function. Plays a role in protection of cells from ER stress-induced apoptosis. Protects cells from oxidative stress when overexpressed in cardiomyocytes. The protein is Selenoprotein K of Chinchilla lanigera (Long-tailed chinchilla).